The following is a 508-amino-acid chain: Ribonuclease Y (508 aa).

A helical membrane pass occupies residues 1-21 (MMLWYIVAGAGGLLIGYLIAN). One can recognise a KH domain in the interval 198-283 (TVSTVSLPSD…EMYEKAKQEV (86 aa)). The 94-residue stretch at 324–417 (VLNHSIEVAL…VAAADALSAA (94 aa)) folds into the HD domain.

This sequence belongs to the RNase Y family.

The protein resides in the cell membrane. Functionally, endoribonuclease that initiates mRNA decay. This is Ribonuclease Y from Thermotoga maritima (strain ATCC 43589 / DSM 3109 / JCM 10099 / NBRC 100826 / MSB8).